The following is a 589-amino-acid chain: Kelch-like protein 25 (589 aa).

The 69-residue stretch at 46–114 (TDVTLWAGDR…AYSSRIVINE (69 aa)) folds into the BTB domain. The BACK domain occupies 149–250 (CLGMMVLSDA…LPSDCLKKAV (102 aa)). 6 Kelch repeats span residues 296–340 (TLLI…AIGC), 341–388 (KVYV…ELEN), 389–444 (CLYV…SAKL), 446–492 (LFVF…VLGS), 493–538 (QIFI…ASGN), and 539–585 (KLYV…STWK).

In terms of assembly, component of the BCR(KLHL25) E3 ubiquitin ligase complex, at least composed of CUL3, KLHL25 and RBX1.

It participates in protein modification; protein ubiquitination. Substrate-specific adapter of a BCR (BTB-CUL3-RBX1) E3 ubiquitin ligase complex involved in various processes, such as translation homeostasis and lipid synthesis. The BCR(KLHL25) ubiquitin ligase complex acts by mediating ubiquitination of hypophosphorylated EIF4EBP1 (4E-BP1): ubiquitination and subsequent degradation of hypophosphorylated EIF4EBP1 (4E-BP1) probably serves as a homeostatic mechanism to maintain translation and prevent eIF4E inhibition when eIF4E levels are low. The BCR(KLHL25) complex does not target EIF4EBP1 (4E-BP1) when it is hyperphosphorylated or associated with eIF4E. The BCR(KLHL25) complex also acts as a regulator of lipid synthesis by mediating ubiquitination and degradation of ACLY, thereby inhibiting lipid synthesis. BCR(KLHL25)-mediated degradation of ACLY promotes fatty acid oxidation and is required for differentiation of inducible regulatory T (iTreg) cells. This is Kelch-like protein 25 from Rattus norvegicus (Rat).